A 412-amino-acid chain; its full sequence is Proteasome-activating nucleotidase 2 (412 aa).

Residues 28 to 74 (LRQHFERMVDVNRELDQRLQNADDRHAELVDEVDQMKARNEALKTAS) adopt a coiled-coil conformation. Residues 196–201 (GTGKTM) and histidine 335 each bind ATP. Residues 409–412 (DYQY) form a docks into pockets in the proteasome alpha-ring to cause gate opening region.

It belongs to the AAA ATPase family. In terms of assembly, homohexamer. The hexameric complex has a two-ring architecture resembling a top hat that caps the 20S proteasome core at one or both ends. Upon ATP-binding, the C-terminus of PAN interacts with the alpha-rings of the proteasome core by binding to the intersubunit pockets.

Its subcellular location is the cytoplasm. Functionally, ATPase which is responsible for recognizing, binding, unfolding and translocation of substrate proteins into the archaeal 20S proteasome core particle. Is essential for opening the gate of the 20S proteasome via an interaction with its C-terminus, thereby allowing substrate entry and access to the site of proteolysis. Thus, the C-termini of the proteasomal ATPase function like a 'key in a lock' to induce gate opening and therefore regulate proteolysis. Unfolding activity requires energy from ATP hydrolysis, whereas ATP binding alone promotes ATPase-20S proteasome association which triggers gate opening, and supports translocation of unfolded substrates. The sequence is that of Proteasome-activating nucleotidase 2 from Haloferax volcanii (strain ATCC 29605 / DSM 3757 / JCM 8879 / NBRC 14742 / NCIMB 2012 / VKM B-1768 / DS2) (Halobacterium volcanii).